We begin with the raw amino-acid sequence, 324 residues long: Uroporphyrinogen decarboxylase (324 aa).

Residues 14–18 (RQAGR), Phe-32, Asp-63, Tyr-136, Ser-191, and His-302 contribute to the substrate site.

It belongs to the uroporphyrinogen decarboxylase family. As to quaternary structure, homodimer.

The protein resides in the cytoplasm. It carries out the reaction uroporphyrinogen III + 4 H(+) = coproporphyrinogen III + 4 CO2. It participates in porphyrin-containing compound metabolism; protoporphyrin-IX biosynthesis; coproporphyrinogen-III from 5-aminolevulinate: step 4/4. In terms of biological role, catalyzes the decarboxylation of four acetate groups of uroporphyrinogen-III to yield coproporphyrinogen-III. The polypeptide is Uroporphyrinogen decarboxylase (Neorickettsia sennetsu (strain ATCC VR-367 / Miyayama) (Ehrlichia sennetsu)).